A 271-amino-acid polypeptide reads, in one-letter code: Pyrroline-5-carboxylate reductase (271 aa).

This sequence belongs to the pyrroline-5-carboxylate reductase family.

The protein localises to the cytoplasm. It catalyses the reaction L-proline + NADP(+) = (S)-1-pyrroline-5-carboxylate + NADPH + 2 H(+). It carries out the reaction L-proline + NAD(+) = (S)-1-pyrroline-5-carboxylate + NADH + 2 H(+). It functions in the pathway amino-acid biosynthesis; L-proline biosynthesis; L-proline from L-glutamate 5-semialdehyde: step 1/1. Functionally, catalyzes the reduction of 1-pyrroline-5-carboxylate (PCA) to L-proline. This is Pyrroline-5-carboxylate reductase from Staphylococcus aureus (strain Mu50 / ATCC 700699).